The sequence spans 192 residues: Phosphoheptose isomerase (192 aa).

The SIS domain occupies 34–192 (VVDAYKAGNK…VERELFVKGK (159 aa)). 49-51 (NGG) serves as a coordination point for substrate. Residues His58 and Glu62 each coordinate Zn(2+). Substrate is bound by residues Glu62, 91–92 (ND), 117–119 (STS), Ser122, and Gln169. Zn(2+)-binding residues include Gln169 and His177.

The protein belongs to the SIS family. GmhA subfamily. In terms of assembly, homotetramer. Zn(2+) is required as a cofactor.

The protein localises to the cytoplasm. It catalyses the reaction 2 D-sedoheptulose 7-phosphate = D-glycero-alpha-D-manno-heptose 7-phosphate + D-glycero-beta-D-manno-heptose 7-phosphate. The protein operates within carbohydrate biosynthesis; D-glycero-D-manno-heptose 7-phosphate biosynthesis; D-glycero-alpha-D-manno-heptose 7-phosphate and D-glycero-beta-D-manno-heptose 7-phosphate from sedoheptulose 7-phosphate: step 1/1. Functionally, catalyzes the isomerization of sedoheptulose 7-phosphate in D-glycero-D-manno-heptose 7-phosphate. This is Phosphoheptose isomerase from Citrifermentans bemidjiense (strain ATCC BAA-1014 / DSM 16622 / JCM 12645 / Bem) (Geobacter bemidjiensis).